Consider the following 154-residue polypeptide: Ribosome maturation factor RimP (154 aa).

It belongs to the RimP family.

It is found in the cytoplasm. In terms of biological role, required for maturation of 30S ribosomal subunits. In Yersinia pseudotuberculosis serotype O:1b (strain IP 31758), this protein is Ribosome maturation factor RimP.